A 601-amino-acid polypeptide reads, in one-letter code: Nuclear envelope protein ndc1 (601 aa).

Over 1-34 (MVMLRTSFPSGSRTKAVRYHTLLRPILQQRFLRA) the chain is Cytoplasmic. The chain crosses the membrane as a helical span at residues 35-55 (CFALLCLCCITSYWFSSGPFI). The Perinuclear space segment spans residues 56 to 58 (SLS). Residues 59 to 79 (FWFLSLVRGFVCFFFMFPYFV) traverse the membrane as a helical segment. Over 80-106 (MLKSRMSTQKVTKQSLGAQLFYDFSPK) the chain is Cytoplasmic. Residues 107–127 (SFFLVYLTFAVSVSCLCLFYI) traverse the membrane as a helical segment. Over 128–153 (KGHASSIRLQWIASPNAYELPSLNER) the chain is Perinuclear space. A helical transmembrane segment spans residues 154–174 (FVYMTYFSHILILALTVEHLY). The Cytoplasmic segment spans residues 175-182 (LQRDSPSR). The chain crosses the membrane as a helical span at residues 183-203 (PVINVSFFNYIFQNLGWLIRF). At 204–256 (SFRKSIICCLFTPFSYAILRSYIWRFAALLTSCCRRIAYTKTPPKWPLSLRLL) the chain is on the perinuclear space side. The chain crosses the membrane as a helical span at residues 257–277 (LHSFWMAFIVCLTFQIALLIF). At 278 to 601 (RVFLYSGPMI…VLFREYKSNS (324 aa)) the chain is on the cytoplasmic side.

This sequence belongs to the NDC1 family. As to quaternary structure, component of the nuclear pore complex (NPC). NPC constitutes the exclusive means of nucleocytoplasmic transport. NPCs allow the passive diffusion of ions and small molecules and the active, nuclear transport receptor-mediated bidirectional transport of macromolecules such as proteins, RNAs, ribonucleoparticles (RNPs), and ribosomal subunits across the nuclear envelope. Due to its 8-fold rotational symmetry, all subunits are present with 8 copies or multiples thereof.

Its subcellular location is the nucleus. The protein localises to the nuclear pore complex. It is found in the nucleus membrane. It localises to the cytoplasm. The protein resides in the cytoskeleton. Its subcellular location is the microtubule organizing center. The protein localises to the spindle pole body. Its function is as follows. Component of the nuclear pore complex (NPC) and the spindle pole body (SPB), which plays a key role in de novo assembly and insertion of both structures in the nuclear envelope. Involved in the formation of the bipolar mitotic spindle. Anchors the spindle pole body in the nuclear envelope. The polypeptide is Nuclear envelope protein ndc1 (cut11) (Schizosaccharomyces pombe (strain 972 / ATCC 24843) (Fission yeast)).